A 124-amino-acid chain; its full sequence is Fluoride-specific ion channel FluC 2 (124 aa).

The next 4 helical transmembrane spans lie at 1–21, 34–54, 66–86, and 103–123; these read MSDI…RFQI, FLIL…LSLV, LILF…SFVY, and LFII…FLGT. Na(+) contacts are provided by glycine 76 and serine 79.

This sequence belongs to the fluoride channel Fluc/FEX (TC 1.A.43) family.

It is found in the cell inner membrane. It catalyses the reaction fluoride(in) = fluoride(out). Its activity is regulated as follows. Na(+) is not transported, but it plays an essential structural role and its presence is essential for fluoride channel function. Functionally, fluoride-specific ion channel. Important for reducing fluoride concentration in the cell, thus reducing its toxicity. This Prochlorococcus marinus (strain NATL2A) protein is Fluoride-specific ion channel FluC 2.